Here is a 723-residue protein sequence, read N- to C-terminus: UPF0313 protein YgiQ (723 aa).

The Radical SAM core domain maps to 372 to 650; it reads AYEMIRFSIN…KALLRYHDPA (279 aa). 3 residues coordinate [4Fe-4S] cluster: cysteine 386, cysteine 390, and cysteine 393. Residues 686-723 form a disordered region; that stretch reads EARRQNRNTRPALTKHTPVEHQRQGLAANKKRGKGAGR. A compositionally biased stretch (basic residues) spans 714–723; that stretch reads NKKRGKGAGR.

This sequence belongs to the UPF0313 family. The cofactor is [4Fe-4S] cluster.

This chain is UPF0313 protein YgiQ, found in Salmonella typhimurium (strain LT2 / SGSC1412 / ATCC 700720).